A 220-amino-acid polypeptide reads, in one-letter code: Claudin-22 (220 aa).

Topologically, residues 1–10 are cytoplasmic; it reads MALVFRTVAQ. A helical membrane pass occupies residues 11–30; it reads LAGVSLSLLGWVLSCLTNYL. Residues 31-81 lie on the Extracellular side of the membrane; it reads PHWKNLNLDLNEMENWTMGLWQTCVIQEEVGMQCKDFDSFLALPAELRVSR. A helical membrane pass occupies residues 82–102; it reads ILMFLSNGLGFLGLLVSGFGL. Residues 103–117 are Cytoplasmic-facing; that stretch reads DCLRIGESQRDLKRR. The chain crosses the membrane as a helical span at residues 118-138; the sequence is LLILGGILSWASGVTALVPVS. The Extracellular segment spans residues 139–164; the sequence is WVAHKTVQEFWDENVPDFVPRWEFGE. Residues 165–185 traverse the membrane as a helical segment; the sequence is ALFLGWFAGLSLLLGGCLLHC. The Cytoplasmic segment spans residues 186 to 220; that stretch reads AACSSHAPLASGHYAVAQTQDHHQELETRNTNLKH.

This sequence belongs to the claudin family.

It localises to the cell junction. Its subcellular location is the tight junction. The protein localises to the cell membrane. Plays a major role in tight junction-specific obliteration of the intercellular space, through calcium-independent cell-adhesion activity. This is Claudin-22 (CLDN22) from Homo sapiens (Human).